The primary structure comprises 159 residues: Cytochrome P450 monooxygenase aunB (159 aa).

Cys134 is a binding site for heme.

It belongs to the cytochrome P450 family. Heme serves as cofactor.

It catalyses the reaction 2 fonsecin B + NADPH + O2 + H(+) = aurasperone B + NADP(+) + 2 H2O. It carries out the reaction 2 rubrofusarin B + NADPH + O2 + H(+) = aurasperone A + NADP(+) + 2 H2O. It functions in the pathway secondary metabolite biosynthesis. Cytochrome P450 monooxygenase; part of the gene cluster that mediates the biosynthesis of aurasperone B, a dimeric gamma-naphthopyrone. The first step in the biosynthesis of aurasperone B is the production of gamma-naphthopyrone precursor YWA1 by the non-reducing polyketide synthase albA, via condensation of one acetyl-CoA starter unit with 6 malonyl-CoA units. YWA1 is then methylated by aunE at position C-6 to yield foncesin which is further methylated at position C-8 by aunD to produce fonsecin B. A key enzyme in the biosynthetic pathway is the cytochrome P450 monooxygenase aunB which catalyzes the oxidative dimerization of fonsecin B to aurasperone B. AunB also catalyzes the oxidative dimerization of rubrofusarin B into aurasperone A. The protein is Cytochrome P450 monooxygenase aunB of Aspergillus niger (strain ATCC 1015 / CBS 113.46 / FGSC A1144 / LSHB Ac4 / NCTC 3858a / NRRL 328 / USDA 3528.7).